Consider the following 187-residue polypeptide: Superoxide dismutase [Cu-Zn] (187 aa).

The N-terminal stretch at Met-1 to Ala-23 is a signal peptide. Cu cation contacts are provided by His-80, His-82, and His-105. The cysteines at positions 87 and 183 are disulfide-linked. Zn(2+) contacts are provided by His-105, His-114, His-123, and Asp-126. Position 161 (His-161) interacts with Cu cation.

The protein belongs to the Cu-Zn superoxide dismutase family. As to quaternary structure, homodimer. The cofactor is Cu cation. It depends on Zn(2+) as a cofactor.

It localises to the periplasm. The catalysed reaction is 2 superoxide + 2 H(+) = H2O2 + O2. Destroys radicals which are normally produced within the cells and which are toxic to biological systems. In terms of biological role, may confer survival advantage by accelerating dismutation of superoxide of environmental origin to hydrogen peroxide, disruptive to the normal mucociliary clearance process in the host. The protein is Superoxide dismutase [Cu-Zn] (sodC) of Haemophilus parainfluenzae.